The primary structure comprises 575 residues: Guanine nucleotide-binding protein-like 3-like protein (575 aa).

The span at 1-30 (MMKLRHKNKKPGKGSKGCKKPAKQNGKKAA) shows a compositional bias: basic residues. The disordered stretch occupies residues 1–75 (MMKLRHKNKK…AAREQERHRR (75 aa)). The tract at residues 9–28 (KKPGKGSKGCKKPAKQNGKK) is required for nucleolar localization. The segment covering 42–72 (SNDHASREAELKKKRVGEMREKQQAAREQER) has biased composition (basic and acidic residues). Residues 51 to 79 (ELKKKRVGEMREKQQAAREQERHRRRTIE) are a coiled coil. In terms of domain architecture, CP-type G spans 118 to 303 (YKEFHKVVEY…LLDAPGIVPG (186 aa)). Residues 166-169 (NKID), 252-259 (GLPNVGKS), and 296-299 (DAPG) contribute to the GTP site. Lys-470 participates in a covalent cross-link: Glycyl lysine isopeptide (Lys-Gly) (interchain with G-Cter in SUMO1).

This sequence belongs to the TRAFAC class YlqF/YawG GTPase family. Interacts with MDM2; this interaction, which occurs in the nucleoplasm, stabilizes MDM2. Indirectly interacts with TP53, via MDM2-binding. Interacts with TERF1; this interaction probably occurs in the nucleoplasm and is increased during mitosis, when the nucleolus is disassembled. This binding may promote TERF1 homodimerization. Interacts with TERT.

It localises to the nucleus. Its subcellular location is the nucleolus. Its function is as follows. Stabilizes TERF1 telomeric association by preventing TERF1 recruitment by PML. Stabilizes TERF1 protein by preventing its ubiquitination and hence proteasomal degradation. Does so by interfering with TERF1-binding to FBXO4 E3 ubiquitin-protein ligase. Required for cell proliferation. By stabilizing TRF1 protein during mitosis, promotes metaphase-to-anaphase transition. Stabilizes MDM2 protein by preventing its ubiquitination, and hence proteasomal degradation. By acting on MDM2, may affect TP53 activity. Required for normal processing of ribosomal pre-rRNA. Binds GTP. The sequence is that of Guanine nucleotide-binding protein-like 3-like protein (GNL3L) from Bos taurus (Bovine).